The following is a 146-amino-acid chain: Large ribosomal subunit protein uL15 (146 aa).

Residues 1 to 58 (MNLSELRPAPGARKKPTRKGQGIGSGLGKTAGKGHKGQNARSGGGVRPGFEGGQMPLQ) form a disordered region. Gly residues-rich tracts occupy residues 21–31 (QGIGSGLGKTA) and 42–52 (SGGGVRPGFEG).

This sequence belongs to the universal ribosomal protein uL15 family. Part of the 50S ribosomal subunit.

Functionally, binds to the 23S rRNA. This Desulforamulus reducens (strain ATCC BAA-1160 / DSM 100696 / MI-1) (Desulfotomaculum reducens) protein is Large ribosomal subunit protein uL15.